Consider the following 288-residue polypeptide: Probable aquaporin PIP1-2 (288 aa).

A disordered region spans residues 1-37 (MEGKEEDVRLGANKFSERQPIGTAAQGSDDKDYKEPP). The next 2 membrane-spanning stretches (helical) occupy residues 57-77 (IAEF…VMGV) and 92-114 (IAWS…SGGH). The short motif at 116 to 118 (NPA) is the NPA 1 element. Helical transmembrane passes span 135 to 155 (LFYM…VKGF), 177 to 197 (GDGL…VFSA), and 211 to 231 (ILAP…TIPI). The short motif at 237–239 (NPA) is the NPA 2 element. The chain crosses the membrane as a helical span at residues 259–279 (IFWVGPFIGAALAAIYHQVVI).

It belongs to the MIP/aquaporin (TC 1.A.8) family. PIP (TC 1.A.8.11) subfamily. As to expression, expressed in roots, leaves and anthers.

It localises to the cell membrane. Aquaporins facilitate the transport of water and small neutral solutes across cell membranes. This chain is Probable aquaporin PIP1-2 (PIP1-2), found in Oryza sativa subsp. japonica (Rice).